Reading from the N-terminus, the 394-residue chain is Chorismate synthase (394 aa).

The NADP(+) site is built by R42 and R48. Residues 137–139 (RAS), 258–259 (QA), G302, 317–321 (KPIAT), and R343 each bind FMN.

Belongs to the chorismate synthase family. As to quaternary structure, homotetramer. FMNH2 serves as cofactor.

The catalysed reaction is 5-O-(1-carboxyvinyl)-3-phosphoshikimate = chorismate + phosphate. Its pathway is metabolic intermediate biosynthesis; chorismate biosynthesis; chorismate from D-erythrose 4-phosphate and phosphoenolpyruvate: step 7/7. Catalyzes the anti-1,4-elimination of the C-3 phosphate and the C-6 proR hydrogen from 5-enolpyruvylshikimate-3-phosphate (EPSP) to yield chorismate, which is the branch point compound that serves as the starting substrate for the three terminal pathways of aromatic amino acid biosynthesis. This reaction introduces a second double bond into the aromatic ring system. The sequence is that of Chorismate synthase from Streptomyces coelicolor (strain ATCC BAA-471 / A3(2) / M145).